Reading from the N-terminus, the 36-residue chain is Photosystem I reaction center subunit VIII (36 aa).

Residues 6-28 (LPSIFVPLIGLFFPAIAMASLFL) form a helical membrane-spanning segment.

Belongs to the PsaI family.

The protein localises to the plastid. It is found in the chloroplast thylakoid membrane. Its function is as follows. May help in the organization of the PsaL subunit. The sequence is that of Photosystem I reaction center subunit VIII from Amborella trichopoda.